The chain runs to 1485 residues: Chromosome partition protein MukB (1485 aa).

Residue 34 to 41 (GGNGAGKS) coordinates ATP. 2 coiled-coil regions span residues 311 to 480 (EMAR…EAYR) and 519 to 665 (GARL…RLSQ). A flexible hinge region spans residues 666 to 783 (PGGAEDARLI…SLPLFGRAAR (118 aa)). Coiled-coil stretches lie at residues 832–1115 (NDPE…QAKA) and 1209–1265 (IDAI…LQSV).

The protein belongs to the SMC family. MukB subfamily. Homodimerization via its hinge domain. Binds to DNA via its C-terminal region. Interacts, and probably forms a ternary complex, with MukE and MukF via its C-terminal region. The complex formation is stimulated by calcium or magnesium. Interacts with tubulin-related protein FtsZ.

It localises to the cytoplasm. Its subcellular location is the nucleoid. Its function is as follows. Plays a central role in chromosome condensation, segregation and cell cycle progression. Functions as a homodimer, which is essential for chromosome partition. Involved in negative DNA supercoiling in vivo, and by this means organize and compact chromosomes. May achieve or facilitate chromosome segregation by condensation DNA from both sides of a centrally located replisome during cell division. In Edwardsiella ictaluri (strain 93-146), this protein is Chromosome partition protein MukB.